The sequence spans 326 residues: Sigma-C capsid protein (326 aa).

Residues 60-80 (NISANLQDMTHTLDDVTANLD) adopt a coiled-coil conformation.

It belongs to the orthoreovirus sigma C protein family. As to quaternary structure, homotrimer.

The protein localises to the virion. In terms of biological role, structural protein responsible for cell attachment. Induces cell apoptosis. In Avian reovirus (strain S1133) (ARV), this protein is Sigma-C capsid protein.